The sequence spans 58 residues: Proteinase inhibitor PSKP-2 (58 aa).

The Kazal-like domain occupies 1–58 (VIEPDCKKYEGKKCPPDIALVCGTNGREYYNECALCVFIRDSTLKADKAIKIKKWGKC). 3 cysteine pairs are disulfide-bonded: Cys6/Cys36, Cys14/Cys33, and Cys22/Cys58.

In terms of tissue distribution, skin.

It localises to the secreted. May have a role in mucosal defense against microbes by interacting directly with their membranes. The protein is Proteinase inhibitor PSKP-2 of Phyllomedusa sauvagei (Sauvage's leaf frog).